The primary structure comprises 298 residues: ADP/ATP translocase 1 (298 aa).

The Mitochondrial intermembrane portion of the chain corresponds to 1–7; the sequence is MSDQALS. N-acetylserine is present on serine 2. The Solcar 1 repeat unit spans residues 6–98; that stretch reads LSFLKDFLAG…FAFKDKYKQI (93 aa). At serine 7 the chain carries Phosphoserine. A helical membrane pass occupies residues 8 to 37; it reads FLKDFLAGGVAAAVSKTAVAPIERVKLLLQ. Residues 38 to 74 are Mitochondrial matrix-facing; sequence VQHASKQISAEKQYKGIIDCVVRIPKEQGFLSFWRGN. At lysine 52 the chain carries N6,N6,N6-trimethyllysine. A helical transmembrane segment spans residues 75 to 99; the sequence is LANVIRYFPTQALNFAFKDKYKQIF. ADP-binding residues include arginine 80 and lysine 92. The Mitochondrial intermembrane segment spans residues 100–109; it reads LGGVDRHKQF. A helical membrane pass occupies residues 110–130; that stretch reads WRYFAGNLASGGAAGATSLCF. Solcar repeat units follow at residues 111–201 and 212–297; these read RYFA…AKGM and VSWM…IKKY. Topologically, residues 131–178 are mitochondrial matrix; the sequence is VYPLDFARTRLAADVGKGAAQREFSGLGNCLTKIFKSDGLRGLYQGFN. N6-succinyllysine is present on lysine 147. Cysteine 160 carries the S-nitrosocysteine modification. A helical membrane pass occupies residues 179–199; it reads VSVQGIIIYRAAYFGVYDTAK. The Mitochondrial intermembrane portion of the chain corresponds to 200 to 210; it reads GMLPDPKNVHI. A helical membrane pass occupies residues 211–231; the sequence is IVSWMIAQTVTAVAGLVSYPF. Over 232–273 the chain is Mitochondrial matrix; it reads DTVRRRMMMQSGRKGADIMYTGTVDCWKKIAKDEGAKAFFKG. Arginine 235 serves as a coordination point for ADP. Residues 235–240 are important for transport activity; sequence RRRMMM. Residues 235 to 240 carry the Nucleotide carrier signature motif motif; the sequence is RRRMMM. Residues lysine 245 and lysine 272 each carry the N6-succinyllysine modification. Residues 274 to 291 traverse the membrane as a helical segment; sequence AWSNVLRGMGGAFVLVLY. Residues 292–298 are Mitochondrial intermembrane-facing; that stretch reads DEIKKYV.

The protein belongs to the mitochondrial carrier (TC 2.A.29) family. Monomer. Found in a complex with ARL2, ARL2BP and SLC25A4/ANT1. Interacts with ARL2BP. Interacts with TIMM44; leading to inhibit the presequence translocase TIMM23, thereby promoting stabilization of PINK1. Under cell death induction, transglutaminated by TGM2. Transglutamination leads to formation of covalent cross-links between a glutamine and the epsilon-amino group of a lysine residue, forming polymers.

It is found in the mitochondrion inner membrane. The protein resides in the membrane. It carries out the reaction ADP(in) + ATP(out) = ADP(out) + ATP(in). The enzyme catalyses H(+)(in) = H(+)(out). With respect to regulation, the matrix-open state (m-state) is inhibited by the membrane-permeable bongkrekic acid (BKA). The cytoplasmic-open state (c-state) is inhibited by the membrane-impermeable toxic inhibitor carboxyatractyloside (CATR). Proton transporter activity is inhibited by ADP:ATP antiporter activity. In terms of biological role, ADP:ATP antiporter that mediates import of ADP into the mitochondrial matrix for ATP synthesis, and export of ATP out to fuel the cell. Cycles between the cytoplasmic-open state (c-state) and the matrix-open state (m-state): operates by the alternating access mechanism with a single substrate-binding site intermittently exposed to either the cytosolic (c-state) or matrix (m-state) side of the inner mitochondrial membrane. In addition to its ADP:ATP antiporter activity, also involved in mitochondrial uncoupling and mitochondrial permeability transition pore (mPTP) activity. Plays a role in mitochondrial uncoupling by acting as a proton transporter: proton transport uncouples the proton flows via the electron transport chain and ATP synthase to reduce the efficiency of ATP production and cause mitochondrial thermogenesis. Proton transporter activity is inhibited by ADP:ATP antiporter activity, suggesting that SLC25A4/ANT1 acts as a master regulator of mitochondrial energy output by maintaining a delicate balance between ATP production (ADP:ATP antiporter activity) and thermogenesis (proton transporter activity). Proton transporter activity requires free fatty acids as cofactor, but does not transport it. Probably mediates mitochondrial uncoupling in tissues that do not express UCP1. Also plays a key role in mPTP opening, a non-specific pore that enables free passage of the mitochondrial membranes to solutes of up to 1.5 kDa, and which contributes to cell death. It is however unclear if SLC25A4/ANT1 constitutes a pore-forming component of mPTP or regulates it. Acts as a regulator of mitophagy independently of ADP:ATP antiporter activity: promotes mitophagy via interaction with TIMM44, leading to inhibit the presequence translocase TIMM23, thereby promoting stabilization of PINK1. In Oryctolagus cuniculus (Rabbit), this protein is ADP/ATP translocase 1.